The chain runs to 309 residues: Protein FdhE (309 aa).

Belongs to the FdhE family.

It localises to the cytoplasm. Necessary for formate dehydrogenase activity. This Salmonella dublin (strain CT_02021853) protein is Protein FdhE.